Consider the following 115-residue polypeptide: Probable non-functional immunoglobulin heavy variable 3-38-3 (115 aa).

The N-terminal stretch at 1–19 (MQFVLSWVFLVAILKGVQC) is a signal peptide. A framework-1 region spans residues 20–44 (EVQLVESRGVLVQPGGSLRLSCAAS). An Ig-like domain is found at 31 to 115 (VQPGGSLRLS…EDTAVYYCKK (85 aa)). Cys41 and Cys113 are oxidised to a cystine. The interval 45-52 (GFTVSSNE) is complementarity-determining-1. Residues 53–69 (MSWVRQAPGKGLEWVSS) form a framework-2 region. The complementarity-determining-2 stretch occupies residues 70–75 (ISGGST). The framework-3 stretch occupies residues 76 to 113 (YYADSRKGRFTISRDNSKNTLHLQMNSLRAEDTAVYYC). The tract at residues 114–115 (KK) is complementarity-determining-3.

As to quaternary structure, immunoglobulins are composed of two identical heavy chains and two identical light chains; disulfide-linked.

The protein localises to the secreted. It is found in the cell membrane. In terms of biological role, probable non-functional open reading frame (ORF) of V region of the variable domain of immunoglobulin heavy chains. Non-functional ORF generally cannot participate in the synthesis of a productive immunoglobulin chain due to altered V-(D)-J or switch recombination and/or splicing site (at mRNA level) and/or conserved amino acid change (protein level). Immunoglobulins, also known as antibodies, are membrane-bound or secreted glycoproteins produced by B lymphocytes. In the recognition phase of humoral immunity, the membrane-bound immunoglobulins serve as receptors which, upon binding of a specific antigen, trigger the clonal expansion and differentiation of B lymphocytes into immunoglobulins-secreting plasma cells. Secreted immunoglobulins mediate the effector phase of humoral immunity, which results in the elimination of bound antigens. The antigen binding site is formed by the variable domain of one heavy chain, together with that of its associated light chain. Thus, each immunoglobulin has two antigen binding sites with remarkable affinity for a particular antigen. The variable domains are assembled by a process called V-(D)-J rearrangement and can then be subjected to somatic hypermutations which, after exposure to antigen and selection, allow affinity maturation for a particular antigen. This is Probable non-functional immunoglobulin heavy variable 3-38-3 from Homo sapiens (Human).